We begin with the raw amino-acid sequence, 186 residues long: MNVRDVAQRTEPKMKKTIEAFQHEIASIRTGKATTALLDRVKVEAYGQQMPLKQVGNVGVMDVHTLMVQVWDKSMVSATERAIRDANLGLNPAADGQSIRVSIPPLTEERRKEFVKLTKKFGEDSKVSLRNLRRDMIHEIEKLEKEKAISEDDKNKGKKEADEMLHKFEKQLNDLIVLKEKEIMEV.

Belongs to the RRF family.

The protein resides in the cytoplasm. Responsible for the release of ribosomes from messenger RNA at the termination of protein biosynthesis. May increase the efficiency of translation by recycling ribosomes from one round of translation to another. This chain is Ribosome-recycling factor, found in Chlorobium phaeobacteroides (strain DSM 266 / SMG 266 / 2430).